The sequence spans 281 residues: 3-methyl-2-oxobutanoate hydroxymethyltransferase (281 aa).

The interval 1 to 20 is disordered; it reads MSEQTIYGANTPGGSGPRTK. Mg(2+) is bound by residues aspartate 62 and aspartate 101. 3-methyl-2-oxobutanoate is bound by residues 62–63, aspartate 101, and lysine 131; that span reads DS. Residue glutamate 133 participates in Mg(2+) binding. Glutamate 199 (proton acceptor) is an active-site residue.

The protein belongs to the PanB family. In terms of assembly, homodecamer; pentamer of dimers. Mg(2+) is required as a cofactor.

The protein localises to the cytoplasm. The enzyme catalyses 3-methyl-2-oxobutanoate + (6R)-5,10-methylene-5,6,7,8-tetrahydrofolate + H2O = 2-dehydropantoate + (6S)-5,6,7,8-tetrahydrofolate. Its pathway is cofactor biosynthesis; (R)-pantothenate biosynthesis; (R)-pantoate from 3-methyl-2-oxobutanoate: step 1/2. In terms of biological role, catalyzes the reversible reaction in which hydroxymethyl group from 5,10-methylenetetrahydrofolate is transferred onto alpha-ketoisovalerate to form ketopantoate. The polypeptide is 3-methyl-2-oxobutanoate hydroxymethyltransferase (Mycobacterium bovis (strain ATCC BAA-935 / AF2122/97)).